Reading from the N-terminus, the 294-residue chain is Glyceraldehyde-3-phosphate dehydrogenase (294 aa).

The NAD(+) site is built by D19, K63, and T105. D-glyceraldehyde 3-phosphate contacts are provided by residues S134 to T136, T165, T194 to G195, and R217. The Nucleophile role is filled by C135.

This sequence belongs to the glyceraldehyde-3-phosphate dehydrogenase family. In terms of assembly, homotetramer.

The protein localises to the cytoplasm. It catalyses the reaction D-glyceraldehyde 3-phosphate + phosphate + NAD(+) = (2R)-3-phospho-glyceroyl phosphate + NADH + H(+). The protein operates within carbohydrate degradation; glycolysis; pyruvate from D-glyceraldehyde 3-phosphate: step 1/5. In terms of biological role, catalyzes the oxidative phosphorylation of glyceraldehyde 3-phosphate (G3P) to 1,3-bisphosphoglycerate (BPG) using the cofactor NAD. The first reaction step involves the formation of a hemiacetal intermediate between G3P and a cysteine residue, and this hemiacetal intermediate is then oxidized to a thioester, with concomitant reduction of NAD to NADH. The reduced NADH is then exchanged with the second NAD, and the thioester is attacked by a nucleophilic inorganic phosphate to produce BPG. The protein is Glyceraldehyde-3-phosphate dehydrogenase (gap) of Klebsiella aerogenes (Enterobacter aerogenes).